The sequence spans 618 residues: Auxin efflux carrier component 3a (618 aa).

Topologically, residues 1–6 are extracellular; that stretch reads MISGHD. The helical transmembrane segment at 7 to 27 threads the bilayer; sequence FYTVMAAVVPLYVAMFLAYGS. Topologically, residues 28 to 38 are cytoplasmic; the sequence is VRWWGIFTPDQ. Residues 39 to 59 form a helical membrane-spanning segment; it reads CSGINRFVAIFAVPLLSFHFI. Val51 lines the (indol-3-yl)acetate pocket. Over 60 to 70 the chain is Extracellular; it reads STNDPYAMNLR. The helical transmembrane segment at 71–90 threads the bilayer; it reads FLAADTLQKLLVLAGLAAWS. Over 91-104 the chain is Cytoplasmic; it reads RLPSRTGAPRLDWS. A helical transmembrane segment spans residues 105–125; the sequence is ITLFSLSTLPNTLVMGIPLLI. (indol-3-yl)acetate-binding residues include Asn115 and Leu117. At 126 to 134 the chain is on the extracellular side; the sequence is AMYGPYSGS. A helical transmembrane segment spans residues 135 to 155; it reads LMVQIVVLQCIIWYTLMLFLF. Residue Tyr148 coordinates (indol-3-yl)acetate. Over 156–478 the chain is Cytoplasmic; that stretch reads EFRAARMLIA…LIRNPNTYSS (323 aa). The segment covering 281 to 293 has biased composition (polar residues); it reads SLQSSRGPTPRQS. A disordered region spans residues 281–312; that stretch reads SLQSSRGPTPRQSNFDEHSARPPKPPATTTGA. The chain crosses the membrane as a helical span at residues 479–499; the sequence is LLGLAWSLVAFRWHVSMPAIV. At 500–502 the chain is on the extracellular side; it reads EKS. Residues 503-523 traverse the membrane as a helical segment; that stretch reads ISILSDAGLGMAMFSLGLFMA. Residues 524–539 lie on the Cytoplasmic side of the membrane; that stretch reads LQPSIIACGKSAAVVS. The helical transmembrane segment at 540-560 threads the bilayer; sequence MAVRFLAGPAVMAAASIAIGL. Topologically, residues 561–563 are extracellular; it reads RGT. Residues 564 to 584 traverse the membrane as a helical segment; that stretch reads LLHVAIVQAALPQGIVPFVFA. 2 residues coordinate (indol-3-yl)acetate: Ile578 and Val579. Over 585 to 597 the chain is Cytoplasmic; sequence KEYNVHPAILSTA. A helical transmembrane segment spans residues 598-618; the sequence is VIFGMLIALPITLLYYILLGL.

The protein belongs to the auxin efflux carrier (TC 2.A.69.1) family. As to quaternary structure, homodimer. Expressed in coleoptiles, roots, vascular bundles of leaves, shoots, lamina joints and vascular bundles of the lemma and filament. Expressed in stem bases, stems, leaves and young panicles.

It localises to the cell membrane. Acts as a component of the auxin efflux carrier. Involved in the polar auxin transport which may regulate crown root development and response to water stress. The polypeptide is Auxin efflux carrier component 3a (Oryza sativa subsp. japonica (Rice)).